The following is a 110-amino-acid chain: U1-lycotoxin-Ls1mm (110 aa).

The first 20 residues, 1–20 (MKFVLLFGVLLVTLFSYSSA), serve as a signal peptide directing secretion. The propeptide occupies 21 to 44 (EMLDDFDQADEDELLSLIEKEEAR). 4 cysteine pairs are disulfide-bonded: Cys-47–Cys-62, Cys-54–Cys-71, Cys-61–Cys-89, and Cys-73–Cys-87.

The protein belongs to the neurotoxin 19 (CSTX) family. 03 subfamily. In terms of tissue distribution, expressed by the venom gland.

The protein localises to the secreted. The sequence is that of U1-lycotoxin-Ls1mm from Lycosa singoriensis (Wolf spider).